The following is a 199-amino-acid chain: Isopentenyl-diphosphate Delta-isomerase (199 aa).

Mn(2+) is bound by residues H40 and H47. The Nudix hydrolase domain maps to 45–186; sequence PRHLAFSCHV…PALLSPWAVE (142 aa). The active site involves C82. Residue C82 coordinates Mg(2+). H84 is a Mn(2+) binding site. E102 contacts Mg(2+). Residues E131 and E133 each contribute to the Mn(2+) site. E133 is an active-site residue.

It belongs to the IPP isomerase type 1 family. Mg(2+) serves as cofactor. Mn(2+) is required as a cofactor.

Its subcellular location is the cytoplasm. The enzyme catalyses isopentenyl diphosphate = dimethylallyl diphosphate. It participates in isoprenoid biosynthesis; dimethylallyl diphosphate biosynthesis; dimethylallyl diphosphate from isopentenyl diphosphate: step 1/1. Functionally, catalyzes the 1,3-allylic rearrangement of the homoallylic substrate isopentenyl (IPP) to its highly electrophilic allylic isomer, dimethylallyl diphosphate (DMAPP). The chain is Isopentenyl-diphosphate Delta-isomerase from Cutibacterium acnes (strain DSM 16379 / KPA171202) (Propionibacterium acnes).